Reading from the N-terminus, the 521-residue chain is Probable cytochrome P450 12d1 distal, mitochondrial (521 aa).

The transit peptide at 1–19 directs the protein to the mitochondrion; sequence MNTLSSARSVAIYVGPVRS. Heme is bound at residue Cys-467.

It belongs to the cytochrome P450 family. Heme is required as a cofactor.

It localises to the mitochondrion membrane. The sequence is that of Probable cytochrome P450 12d1 distal, mitochondrial from Drosophila melanogaster (Fruit fly).